We begin with the raw amino-acid sequence, 736 residues long: Oxysterol-binding protein-related protein 9 (736 aa).

At Ala-2 the chain carries N-acetylalanine. One can recognise a PH domain in the interval 2-99 (ASIMEGPLSK…WIHALEETIL (98 aa)). Residues 231-367 (KSEQRPSSLP…DRDDDAEAGS (137 aa)) form a disordered region. Residues 253-290 (TPTPNSTGSGHSPPSSSLTSPSHVNLSPNTVPEFSYSS) show a composition bias toward low complexity. Ser-306, Ser-324, Ser-325, Ser-326, and Ser-329 each carry phosphoserine. 2 stretches are compositionally biased toward polar residues: residues 314 to 329 (SSGS…SGNS) and 336 to 347 (TESLNSSLSNGT). Position 611 is a phosphoserine (Ser-611).

It belongs to the OSBP family. In terms of assembly, heterodimer with OSBPL11. Interacts with OSBPL10. Widely expressed.

It is found in the late endosome membrane. The protein localises to the golgi apparatus. Its subcellular location is the trans-Golgi network membrane. It carries out the reaction a 1,2-diacyl-sn-glycero-3-phospho-(1D-myo-inositol 4-phosphate)(out) + a 1,2-diacyl-sn-glycero-3-phospho-L-serine(in) = a 1,2-diacyl-sn-glycero-3-phospho-(1D-myo-inositol 4-phosphate)(in) + a 1,2-diacyl-sn-glycero-3-phospho-L-serine(out). Interacts with OSBPL11 to function as lipid transfer proteins. Together they form a heterodimer that localizes at the ER-trans-Golgi membrane contact sites, and exchanges phosphatidylserine (1,2-diacyl-sn-glycero-3-phospho-L-serine, PS) for phosphatidylinositol-4-phosphate (1,2-diacyl-sn-glycero-3-phospho-(1D-myo-inositol 4-phosphate), PI(4)P) between the two organelles, a step that is critical for sphingomyelin synthesis in the Golgi complex. This is Oxysterol-binding protein-related protein 9 (OSBPL9) from Homo sapiens (Human).